A 128-amino-acid polypeptide reads, in one-letter code: MLYQILALLIWSSSLIVGKLTYSMMDPVLVVQVRLIIAMIIVMPLFLRRWKKIDKPMRKQLWWLAFFNYTAVFLLQFIGLKYTSASSAVTMIGLEPLLVVFVGHFFFKTKQNGFTGYSVQWHLLAWQF.

4 helical membrane-spanning segments follow: residues 5–25 (ILAL…YSMM), 27–47 (PVLV…PLFL), 60–80 (QLWW…FIGL), and 87–107 (SAVT…HFFF). An EamA domain is found at 9 to 110 (LIWSSSLIVG…FVGHFFFKTK (102 aa)).

The protein resides in the cell membrane. This is an uncharacterized protein from Haemophilus influenzae (strain ATCC 51907 / DSM 11121 / KW20 / Rd).